Consider the following 380-residue polypeptide: 1-deoxy-D-xylulose 5-phosphate reductoisomerase (380 aa).

Residues Thr-9, Gly-10, Ser-11, Val-12, Arg-36, and Asn-117 each contribute to the NADPH site. 1-deoxy-D-xylulose 5-phosphate is bound at residue Lys-118. An NADPH-binding site is contributed by Glu-119. Asp-139 serves as a coordination point for Mn(2+). Positions 140, 141, 165, and 188 each coordinate 1-deoxy-D-xylulose 5-phosphate. Mn(2+) is bound at residue Glu-141. Position 194 (Gly-194) interacts with NADPH. 1-deoxy-D-xylulose 5-phosphate is bound by residues Ser-201, Asn-206, Lys-207, and Glu-210. Glu-210 is a Mn(2+) binding site.

It belongs to the DXR family. The cofactor is Mg(2+). Requires Mn(2+) as cofactor.

The catalysed reaction is 2-C-methyl-D-erythritol 4-phosphate + NADP(+) = 1-deoxy-D-xylulose 5-phosphate + NADPH + H(+). Its pathway is isoprenoid biosynthesis; isopentenyl diphosphate biosynthesis via DXP pathway; isopentenyl diphosphate from 1-deoxy-D-xylulose 5-phosphate: step 1/6. Catalyzes the NADPH-dependent rearrangement and reduction of 1-deoxy-D-xylulose-5-phosphate (DXP) to 2-C-methyl-D-erythritol 4-phosphate (MEP). The chain is 1-deoxy-D-xylulose 5-phosphate reductoisomerase from Aquifex aeolicus (strain VF5).